Consider the following 97-residue polypeptide: Citrate lyase acyl carrier protein (97 aa).

The residue at position 14 (Ser14) is an O-(phosphoribosyl dephospho-coenzyme A)serine.

This sequence belongs to the CitD family. As to quaternary structure, oligomer with a subunit composition of (alpha,beta,gamma)6.

Its subcellular location is the cytoplasm. Its function is as follows. Covalent carrier of the coenzyme of citrate lyase. The protein is Citrate lyase acyl carrier protein of Rhodopseudomonas palustris (strain BisA53).